We begin with the raw amino-acid sequence, 313 residues long: Intelectin-1a (313 aa).

A signal peptide spans 1 to 18; it reads MTQLGFLLFIMVATRGCS. Residues 32-251 enclose the Fibrinogen C-terminal domain; it reads SFFSSLPRSC…NNERAASALC (220 aa). C41 and C70 are oxidised to a cystine. 7 residues coordinate Ca(2+): H86, E87, N89, G92, G97, D98, and D133. 3 disulfide bridges follow: C94–C280, C199–C259, and C251–C265. Residues N260, E262, E274, and D282 each coordinate Ca(2+). A carbohydrate-binding positions include 262–263 and E274; that span reads EH. S298 carries the GPI-anchor amidated serine lipid modification. Residues 299–313 constitute a propeptide that is removed on maturation; that stretch reads SSRKITEAAVLLFYR.

As to quaternary structure, monomer. May interact with LTF. In terms of tissue distribution, expressed in small intestinal Paneth cells in uninfected mice. Expression also detected in various other tissues including stomach, kidney, ovary and brain.

It is found in the cell membrane. Its subcellular location is the secreted. Functionally, lectin that specifically recognizes microbial carbohydrate chains in a calcium-dependent manner. Binds to microbial glycans that contain a terminal acyclic 1,2-diol moiety, including beta-linked D-galactofuranose (beta-Galf), D-phosphoglycerol-modified glycans, D-glycero-D-talo-oct-2-ulosonic acid (KO) and 3-deoxy-D-manno-oct-2-ulosonic acid (KDO). Binds to glycans from Gram-positive and Gram-negative bacteria, including K.pneumoniae, S.pneumoniae, Y.pestis, P.mirabilis and P.vulgaris. Does not bind mammalian glycans. Probably plays a role in the defense system against microorganisms. May function as adipokine that has no effect on basal glucose uptake but enhances insulin-stimulated glucose uptake in adipocytes. Increases AKT phosphorylation in the absence and presence of insulin. May interact with lactoferrin/LTF and increase its uptake, and may thereby play a role in iron absorption. The sequence is that of Intelectin-1a (Itln1) from Mus musculus (Mouse).